Consider the following 536-residue polypeptide: Organic anion transporter 3 (536 aa).

The Cytoplasmic segment spans residues 1-11 (MTFSEILDRVG). A Phosphoserine modification is found at serine 4. A helical membrane pass occupies residues 12–32 (SMGPFQYLHVTLLALPVLGIA). The Extracellular segment spans residues 33 to 123 (NHNLLQIFTA…LVCSSNKLKE (91 aa)). N-linked (GlcNAc...) asparagine glycans are attached at residues asparagine 81 and asparagine 86. Residues 124–144 (MAQSIFMAGILVGGPVIGELS) traverse the membrane as a helical segment. The Cytoplasmic portion of the chain corresponds to 145-158 (DRFGRKPILTWSYL). The chain crosses the membrane as a helical span at residues 159 to 179 (MLAASGSGAAFSPSLPVYMIF). A topological domain (extracellular) is located at residue arginine 180. A helical transmembrane segment spans residues 181–201 (FLCGCSISGISLSTVILNVEW). The Cytoplasmic portion of the chain corresponds to 202–212 (VPTSMRAISST). A helical transmembrane segment spans residues 213–233 (SIGYCYTIGQFILSGLAYAIP). Residues 234–236 (QWR) are Extracellular-facing. A helical transmembrane segment spans residues 237-257 (WLQLTSSAPFFIFSLLSWWVP). Residues 258 to 327 (ESIRWLVLSG…FRVSILRRVT (70 aa)) lie on the Cytoplasmic side of the membrane. Residues 328–348 (FCLSLAWFSTGFAYYSLAMGV) form a helical membrane-spanning segment. Over 349–354 (EEFGVN) the chain is Extracellular. A helical transmembrane segment spans residues 355 to 375 (IYILQIIFGGVDIPAKFITIL). The Cytoplasmic segment spans residues 376–383 (SLSYLGRR). A helical transmembrane segment spans residues 384–404 (ITQSFLLLLAGGAILALIFVP). The Extracellular segment spans residues 405–411 (SEMQLLR). Residues 412–432 (TALAVFGKGCLSGSFSCLFLY) form a helical membrane-spanning segment. Topologically, residues 433–471 (TSELYPTVLRQTGMGISNVWARVGSMIAPLVKITGELQP) are cytoplasmic. Residues 472–492 (FIPNVIFGTTALLGGSAAFFL) form a helical membrane-spanning segment. The Extracellular segment spans residues 493–536 (LETLNRPLPETIEDIQNWHKQVQKTKQESEAEKASQIIPLKTGG). A disordered region spans residues 515-536 (QKTKQESEAEKASQIIPLKTGG).

The protein belongs to the major facilitator (TC 2.A.1) superfamily. Organic cation transporter (TC 2.A.1.19) family. In terms of tissue distribution, expressed in the liver, brain, kidney, choroid plexus and weakly in the eye. Moderately expressed (at protein level) in the brain capillary endothelial cells (BCEC).

It localises to the basolateral cell membrane. The catalysed reaction is estrone 3-sulfate(out) + glutarate(in) = estrone 3-sulfate(in) + glutarate(out). The enzyme catalyses estrone 3-sulfate(in) + 2-oxoglutarate(out) = estrone 3-sulfate(out) + 2-oxoglutarate(in). It carries out the reaction glutarate(in) + 2-oxoglutarate(out) = glutarate(out) + 2-oxoglutarate(in). It catalyses the reaction urate(in) + 2-oxoglutarate(out) = urate(out) + 2-oxoglutarate(in). The catalysed reaction is taurocholate(out) + glutarate(in) = taurocholate(in) + glutarate(out). The enzyme catalyses dehydroepiandrosterone 3-sulfate(out) + glutarate(in) = dehydroepiandrosterone 3-sulfate(in) + glutarate(out). It carries out the reaction prostaglandin F2alpha(out) + glutarate(in) = prostaglandin F2alpha(in) + glutarate(out). It catalyses the reaction prostaglandin F2alpha(out) + 2-oxoglutarate(in) = prostaglandin F2alpha(in) + 2-oxoglutarate(out). The catalysed reaction is (R)-carnitine(out) + 2-oxoglutarate(in) = (R)-carnitine(in) + 2-oxoglutarate(out). The enzyme catalyses glutarate(in) + (R)-carnitine(out) = glutarate(out) + (R)-carnitine(in). It carries out the reaction prostaglandin E2(out) + 2-oxoglutarate(in) = prostaglandin E2(in) + 2-oxoglutarate(out). It catalyses the reaction prostaglandin E2(out) + glutarate(in) = prostaglandin E2(in) + glutarate(out). The catalysed reaction is urate(in) + glutarate(out) = urate(out) + glutarate(in). The enzyme catalyses taurocholate(out) + 2-oxoglutarate(in) = taurocholate(in) + 2-oxoglutarate(out). It carries out the reaction dehydroepiandrosterone 3-sulfate(out) + 2-oxoglutarate(in) = dehydroepiandrosterone 3-sulfate(in) + 2-oxoglutarate(out). It catalyses the reaction kynurenate(out) + a dicarboxylate(in) = kynurenate(in) + a dicarboxylate(out). The catalysed reaction is (indol-3-yl)acetate(out) + a dicarboxylate(in) = (indol-3-yl)acetate(in) + a dicarboxylate(out). The enzyme catalyses indoxyl sulfate(out) + a dicarboxylate(in) = indoxyl sulfate(in) + a dicarboxylate(out). It carries out the reaction N-benzoylglycine(out) + a dicarboxylate(in) = N-benzoylglycine(in) + a dicarboxylate(out). It catalyses the reaction 3-carboxy-4-methyl-5-propyl-2-furanpropanoate(out) + a dicarboxylate(in) = 3-carboxy-4-methyl-5-propyl-2-furanpropanoate(in) + a dicarboxylate(out). The catalysed reaction is (6R)-L-erythro-5,6,7,8-tetrahydrobiopterin(out) + a dicarboxylate(in) = (6R)-L-erythro-5,6,7,8-tetrahydrobiopterin(in) + a dicarboxylate(out). The enzyme catalyses L-erythro-7,8-dihydrobiopterin(out) + a dicarboxylate(in) = L-erythro-7,8-dihydrobiopterin(in) + a dicarboxylate(out). It carries out the reaction L-sepiapterin(out) + a dicarboxylate(in) = L-sepiapterin(in) + a dicarboxylate(out). In terms of biological role, functions as an organic anion/dicarboxylate exchanger that couples organic anion uptake indirectly to the sodium gradient. Transports organic anions such as estrone 3-sulfate (E1S) and urate in exchange for dicarboxylates such as glutarate or ketoglutarate (2-oxoglutarate). Plays an important role in the excretion of endogenous and exogenous organic anions, especially from the kidney and the brain. E1S transport is pH- and chloride-dependent and may also involve E1S/cGMP exchange. Responsible for the transport of prostaglandin E2 (PGE2) and prostaglandin F2(alpha) (PGF2(alpha)) in the basolateral side of the renal tubule. Involved in the transport of neuroactive tryptophan metabolites kynurenate and xanthurenate. Functions as a biopterin transporters involved in the uptake and the secretion of coenzymes tetrahydrobiopterin (BH4), dihydrobiopterin (BH2) and sepiapterin to urine, thereby determining baseline levels of blood biopterins. May be involved in the basolateral transport of steviol, a metabolite of the popular sugar substitute stevioside. May participate in the detoxification/ renal excretion of drugs and xenobiotics, such as the histamine H(2)-receptor antagonists fexofenadine and cimetidine, the antibiotic benzylpenicillin (PCG), the anionic herbicide 2,4-dichloro-phenoxyacetate (2,4-D), the diagnostic agent p-aminohippurate (PAH), the antiviral acyclovir (ACV), and the mycotoxin ochratoxin (OTA), by transporting these exogenous organic anions across the cell membrane in exchange for dicarboxylates such as 2-oxoglutarate. Contributes to the renal uptake of potent uremic toxins (indoxyl sulfate (IS), indole acetate (IA), hippurate/N-benzoylglycine (HA) and 3-carboxy-4-methyl-5-propyl-2-furanpropionate (CMPF)), pravastatin, PCG, E1S and dehydroepiandrosterone sulfate (DHEAS), and is partly involved in the renal uptake of temocaprilat (an angiotensin-converting enzyme (ACE) inhibitor). May contribute to the release of cortisol in the adrenals. Involved in one of the detoxification systems on the choroid plexus (CP), removes substrates such as E1S or taurocholate (TC), PCG, 2,4-D and PAH, from the cerebrospinal fluid (CSF) to the blood for eventual excretion in urine and bile. Regulates the CSF concentration of histamine H(2)-receptor antagonists cimetidine and ranitidine at the CP. Also contributes to the uptake of several other organic compounds such as the prostanoids prostaglandin E(2) and prostaglandin F(2-alpha), L-carnitine, and the therapeutic drugs allopurinol, 6-mercaptopurine (6-MP) and 5-fluorouracil (5-FU). Mediates the uptake from brain of organic anions, such as E1S, PAH, and OTA. Mediates the transport of PAH, PCG, and the statins pravastatin and pitavastatin, from the cerebrum into the blood circulation across the blood-brain barrier (BBB). In summary, plays a role in the efflux of drugs and xenobiotics, helping reduce their undesired toxicological effects on the body. This Rattus norvegicus (Rat) protein is Organic anion transporter 3 (Slc22a8).